Here is a 382-residue protein sequence, read N- to C-terminus: F-box/kelch-repeat protein KIB1 (382 aa).

Residues 22 to 69 enclose the F-box domain; it reads SKHSILAVDLVRLILERLSFVDFHRARCVSSIWYIASKTVIGVTNPTT. 3 Kelch repeats span residues 73–117, 159–209, and 259–306; these read ILFP…ASSG, VLWV…FKEN, and IVAK…ITVE.

As to quaternary structure, part of a SCF (SKP1-cullin-F-box) protein ligase complex. Binds directly to several GSK3 family proteins such as SKP1A/ASK1, ASK1/SK11, ASK3/SK12, ASK5/SK13, ASK7/BIN2/SK21, ASK9/SK22 and ASK6/SK23. Interacts with ASK7/BIN2/SK21 in a brassinosteroid (BR)-dependent manner. In terms of tissue distribution, expressed in seedlings, leaves, stems, flower buds and flowers.

Its subcellular location is the cytoplasm. It is found in the nucleus. It localises to the nucleolus. Component of SCF(ASK-cullin-F-box) E3 ubiquitin ligase complexes, which may mediate the ubiquitination and subsequent proteasomal degradation of target proteins. Required for brassinosteroid (BR) signal transduction. Mediates ASK7/BIN2/SK21 inactivation both by competing with substrate binding (e.g. BZR1) and by promoting its ubiquitination and subsequent proteasomal degradation. The protein is F-box/kelch-repeat protein KIB1 of Arabidopsis thaliana (Mouse-ear cress).